Reading from the N-terminus, the 478-residue chain is Early growth response protein 4 (478 aa).

The disordered stretch occupies residues 275 to 302 (TEGLPALLTPPGGEGGSGGEGGEFLAAP). Positions 286-296 (GGEGGSGGEGG) are enriched in gly residues. 3 C2H2-type zinc fingers span residues 372–396 (FACPVESCVRSFARSDELNRHLRIH), 402–424 (FQCRICLRNFSRSDHLTTHVRTH), and 430–452 (FACDVCGRRFARSDEKKRHSKVH).

It belongs to the EGR C2H2-type zinc-finger protein family.

It localises to the nucleus. Transcriptional regulator. Recognizes and binds to the DNA sequence 5'-GCGGGGGCG-3' (GSG). Activates the transcription of target genes whose products are required for mitogenesis and differentiation. The chain is Early growth response protein 4 (Egr4) from Mus musculus (Mouse).